Reading from the N-terminus, the 405-residue chain is Pulcherriminic acid synthase (405 aa).

Lysine 62, asparagine 229, arginine 285, and cysteine 353 together coordinate heme.

This sequence belongs to the cytochrome P450 family. As to quaternary structure, homodimer. It depends on heme as a cofactor.

The catalysed reaction is cyclo(L-leucyl-L-leucyl) + 6 reduced [2Fe-2S]-[ferredoxin] + 3 O2 + 4 H(+) = pulcherriminic acid + 6 oxidized [2Fe-2S]-[ferredoxin] + 4 H2O. Functionally, involved in the biosynthesis of pulcherrimin, a red extracellular pigment. Catalyzes the oxidation of cyclo(L-Leu-L-Leu) (cLL) to yield pulcherriminic acid which forms pulcherrimin via a nonenzymic reaction with Fe(3+). Substrates with small alkyl groups (cAA, cLG, cLP) exhibit weaker binding to CYP134A1, but substrates with larger hydrophobic side chains bind in a similar regime to cLL. This Bacillus subtilis (strain 168) protein is Pulcherriminic acid synthase (cypX).